A 690-amino-acid chain; its full sequence is Subtilisin-like protease 1 (690 aa).

A signal peptide spans 1-25 (MMLNKKVVALCTLTLHLFCIFLCLG). Residues 26–219 (KEVRSEENGK…IESDKLVSAD (194 aa)) constitute a propeptide, inhibition peptide. Residues 99 to 131 (EKNKNDNHNNNNNNNNISSSSSSSSNTFGEEKE) are disordered. Residues 106–124 (HNNNNNNNNISSSSSSSSN) show a composition bias toward low complexity. The N-linked (GlcNAc...) asparagine glycan is linked to asparagine 114. Residues asparagine 147, threonine 150, and proline 152 each contribute to the Ca(2+) site. An N-linked (GlcNAc...) asparagine glycan is attached at asparagine 173. Position 207 (glycine 207) interacts with Ca(2+). Asparagine 263 carries N-linked (GlcNAc...) asparagine glycosylation. 2 disordered regions span residues 266 to 286 (HAAT…DTFS) and 305 to 334 (NNNN…RPGK). The span at 305-330 (NNNNYYYSHSSNGHNSSSRNSSSSRS) shows a compositional bias: low complexity. N-linked (GlcNAc...) asparagine glycans are attached at residues asparagine 319 and asparagine 324. A Ca(2+)-binding site is contributed by glutamate 340. The region spanning 345-663 (QWGLDLSRLD…AGYADINKAV (319 aa)) is the Peptidase S8 domain. Disulfide bonds link cysteine 371/cysteine 481 and cysteine 460/cysteine 477. Aspartate 374 (charge relay system) is an active-site residue. Positions 383, 394, 398, 401, 402, 403, 404, 406, 408, 410, and 411 each coordinate Ca(2+). The N-linked (GlcNAc...) asparagine glycan is linked to asparagine 419. Histidine 430 functions as the Charge relay system in the catalytic mechanism. The Ca(2+) site is built by isoleucine 441, asparagine 444, isoleucine 446, and valine 448. N-linked (GlcNAc...) asparagine glycosylation is found at asparagine 490, asparagine 503, and asparagine 522. A disulfide bridge links cysteine 523 with cysteine 536. Asparagine 605 carries an N-linked (GlcNAc...) asparagine glycan. Catalysis depends on serine 608, which acts as the Charge relay system. An N-linked (GlcNAc...) asparagine glycan is attached at asparagine 677.

The protein belongs to the peptidase S8 family. Heterodimer between p54 form and prodomain p31; the interaction inhibits p54 catalytic activity. Heterodimer p31-p54 is monomeric at basic pH and dimeric at acidic pH; dimerization is driven by the N-terminal prodomain (p31). It depends on Ca(2+) as a cofactor. Post-translationally, the prodomain (p31) is cleaved, probably by autocatalysis, during the transport to or in the Golgi apparatus, and remains non-covalently associated with the p54 form as an inhibitor. p54 is further cleaved into the p47 form. This cleavage is likely occurring in the exoneme prior to egress and is mediated by PMX/plasmepsin X. The p54-to-p47 conversion can be also autocatalytic. Heterodimer p31-p54 is activated by cleavage of prodomain (p31) by the aspartic protease PMX; cleavage by PMX abolishes inhibitory capacity of p31. Primary autocatalytic processing of SUB1 is essential for parasite growth; the p54-to-p47 conversion is dispensable for SUB1 functions in the parasites. The disulfide bond between Cys-523 and Cys-536 acts as a redox-sensitive disulfide switch. The oxidized form is required for catalytic activity. In terms of processing, the relevance of N-glycosylation is not clear. In an insect expression system, SUB1 glycosylation appears to affect its processing into the active mature form suggesting that SUB1 may not be N-glycosylated in parasites.

The protein resides in the secreted. The protein localises to the parasitophorous vacuole lumen. It carries out the reaction Hydrolysis of proteins with broad specificity for peptide bonds, and a preference for a large uncharged residue in P1. Hydrolyzes peptide amides.. Its activity is regulated as follows. p54 and probably p47 forms are inhibited by the non-covalent interaction with the cleaved propeptide. Inhibited by subtilisin propeptide-like protein SUB1-ProM. Inhibited by 3,4-dichloroisocoumarin (DCI) and 4-(hydroxymercuri)benzoic acid (pHMB). Partially inhibited by chymostatin, leupeptin, phenylmethylsulfonyl fluoride (PMSF), and 4-(2-aminoethyl)benzenesulfonyl fluoride. Serine protease which plays an essential role in merozoite invasion of and egress from host erythrocytes by processing and activating various merozoite surface and parasitophorous vacuole proteins. Mediates the proteolytic maturation of serine proteases SERA4, SERA5 and SERA6 just prior to merozoite egress. Prior to merozoite egress, cleaves merozoite surface proteins MSP1, MSP6 and MSP7, which form the MSP1/6/7 complex, and thereby may prime the parasite cell surface for invasion of fresh erythrocytes. Prior to merozoite egress, cleaves MSRP2 converting it to MSRP2 p25 form, and RAP1 converting it to RAP1 p67 form. This Plasmodium falciparum protein is Subtilisin-like protease 1.